Here is a 295-residue protein sequence, read N- to C-terminus: uncharacterized protein (295 aa).

A signal peptide spans 1–19 (MFKKYIFILILFIASIARA). The disordered stretch occupies residues 275 to 295 (RNNPPLKNNNAKGKNPYDTNK). A compositionally biased stretch (low complexity) spans 276-295 (NNPPLKNNNAKGKNPYDTNK).

This is an uncharacterized protein from Rickettsia conorii (strain ATCC VR-613 / Malish 7).